The following is a 286-amino-acid chain: uncharacterized protein (286 aa).

The HTH lysR-type domain maps to 1 to 58; the sequence is MLLEGIETLLVLSKEKTMSRTGSQLYISQSAVSKRIANLEKKLGKKLIVPAGRHIKLT. A DNA-binding region (H-T-H motif) is located at residues 18–37; the sequence is MSRTGSQLYISQSAVSKRIA.

This sequence belongs to the LysR transcriptional regulatory family.

This is an uncharacterized protein from Vibrio cholerae serotype O1 (strain ATCC 39315 / El Tor Inaba N16961).